The sequence spans 320 residues: ATP-dependent 6-phosphofructokinase (320 aa).

Residue Gly11 coordinates ATP. An ADP-binding site is contributed by 21–25; that stretch reads RAVTK. Residues 72–73 and 102–105 contribute to the ATP site; these read RF and GDGS. Position 103 (Asp103) interacts with Mg(2+). 125 to 127 is a binding site for substrate; the sequence is TID. The Proton acceptor role is filled by Asp127. Arg154 is a binding site for ADP. Substrate contacts are provided by residues Arg162 and 169–171; that span reads MGR. ADP-binding positions include 185-187 and 213-215; these read GAD and KDH. Substrate contacts are provided by residues Glu222, Arg243, and 249–252; that span reads HMQR.

It belongs to the phosphofructokinase type A (PFKA) family. ATP-dependent PFK group I subfamily. Prokaryotic clade 'B1' sub-subfamily. As to quaternary structure, homotetramer. Mg(2+) serves as cofactor.

It localises to the cytoplasm. It carries out the reaction beta-D-fructose 6-phosphate + ATP = beta-D-fructose 1,6-bisphosphate + ADP + H(+). It participates in carbohydrate degradation; glycolysis; D-glyceraldehyde 3-phosphate and glycerone phosphate from D-glucose: step 3/4. With respect to regulation, allosterically activated by ADP and other diphosphonucleosides, and allosterically inhibited by phosphoenolpyruvate. Functionally, catalyzes the phosphorylation of D-fructose 6-phosphate to fructose 1,6-bisphosphate by ATP, the first committing step of glycolysis. The polypeptide is ATP-dependent 6-phosphofructokinase (Lactobacillus helveticus (strain DPC 4571)).